A 382-amino-acid polypeptide reads, in one-letter code: Mannan endo-1,4-beta-mannosidase (382 aa).

The N-terminal stretch at 1–19 is a signal peptide; the sequence is MVKLFSFLLLVWVASPAFS. Residues W83, N144, 147 to 151, and N180 each bind substrate; that span reads WDESK. The active-site Proton donor/acceptor is E181. Residues Q187, Q204, W208, W243, Y282, and H284 each coordinate substrate. C195 and C262 are oxidised to a cystine. The Nucleophile role is filled by E312. Residues C317 and C349 are joined by a disulfide bond. 2 residues coordinate substrate: W341 and D348. The interval 346–350 is involved in stabilization of the transition state; the sequence is GGDCS.

It belongs to the glycosyl hydrolase 5 (cellulase A) family. In terms of assembly, monomer.

The protein localises to the secreted. It catalyses the reaction Random hydrolysis of (1-&gt;4)-beta-D-mannosidic linkages in mannans, galactomannans and glucomannans.. Activated particularly by Ca(2+) and Zn(2+), and to a lesser extent by Na(+), K(+), Mg(2+) and Cu(2+). Activation effect of the divalent metal ions Ca(2+), Zn(2+), Mg(2+) and Cu(2+) is reduced significantly by the addition of EDTA. Strongly inhibited by Mn(2+), Hg(2+) and Ag(+). Hydrolyzes 1,4-beta linked polysaccharide backbones of mannans. Has high activity toward locust bean gum. Also active toward konjac and beta-1,4-mannan. Hydrolyzes mannotetraose (M4) and mannopentaose (M5) to mannobiose (M2) and mannotriose (M3) with a little production of mannose (M1). Hydrolyzes beta-1,4-mannan to M2, M3 and M4. Hardly hydrolyzes M2 and M3. Does not hydrolyze p-nitrophenyl-beta-D-mannopyranoside, gua-gum, carboxymethyl cellulose, soluble starch or laminarin. This Cryptopygus antarcticus (Antarctic springtail) protein is Mannan endo-1,4-beta-mannosidase.